We begin with the raw amino-acid sequence, 118 residues long: Ribosome-binding factor A (118 aa).

This sequence belongs to the RbfA family. Monomer. Binds 30S ribosomal subunits, but not 50S ribosomal subunits or 70S ribosomes.

It is found in the cytoplasm. In terms of biological role, one of several proteins that assist in the late maturation steps of the functional core of the 30S ribosomal subunit. Associates with free 30S ribosomal subunits (but not with 30S subunits that are part of 70S ribosomes or polysomes). Required for efficient processing of 16S rRNA. May interact with the 5'-terminal helix region of 16S rRNA. The protein is Ribosome-binding factor A of Clostridium beijerinckii (strain ATCC 51743 / NCIMB 8052) (Clostridium acetobutylicum).